Reading from the N-terminus, the 102-residue chain is Large ribosomal subunit protein bL21 (102 aa).

Belongs to the bacterial ribosomal protein bL21 family. Part of the 50S ribosomal subunit. Contacts protein L20.

In terms of biological role, this protein binds to 23S rRNA in the presence of protein L20. This is Large ribosomal subunit protein bL21 from Photorhabdus laumondii subsp. laumondii (strain DSM 15139 / CIP 105565 / TT01) (Photorhabdus luminescens subsp. laumondii).